A 510-amino-acid polypeptide reads, in one-letter code: MRSRRDNSWVVQKFGGTSIGKFPDKVAEIVKSARLGGDRPAVICSARSSGKKVFGTTSRLLQVYRTLRGIVAITQDPDMQELLFDRLRSIIKDIRDDQVATVQIYILRQDIRDETTRQITADCQELLDYTSAAKRFNLDINGKAKDKMVSFGEKLSCRLMVAMLRDRDIPAEYVDLSDIVPNNNLNHLKPEFFPEAAAVFGKRIEACNGRVPVITGFFGAVPGSLIDSGIGRGYSDLCAVLVAIGLHAERVQIWKEVDGIFTADPREVPDARCLPSITPSEAAELTFYGSEVIHHLALSLAIQAKPPISIFVKNVQKPWGQGTVVVPSDGDDTSSWPIDYLDPSDSDCTSSTALPKMPTAVTIKRDITILNILSNKQSMSHGFFVKVFTILAEHDISVDLISTSEVHVSMAINSSNMDPSQIKDVHCKIAEEGEVNVLPDMAILSLVGAELKNMTGIAGRMFAILGEQHVNIEMISQGASEINISCVIPDKDATRALNMLHNELFTKNAM.

ACT domains are found at residues 372–440 (ILSN…VLPD) and 446–510 (LVGA…KNAM).

This sequence belongs to the aspartokinase family.

It carries out the reaction L-aspartate + ATP = 4-phospho-L-aspartate + ADP. It participates in mycotoxin biosynthesis. Aspartate kinase; part of the gene cluster that mediates the biosynthesis of fusaric acid, a mycotoxin with low to moderate toxicity to animals and humans, but with high phytotoxic properties. L-aspartate is suggested as fusaric acid amino acid precursor that is activated and further processed to O-acetyl-L-homoserine by cluster enzymes aspartate kinase FUB3 and homoserine O-acetyltransferase FUB5, as well as enzymes of the primary metabolism. The polyketide synthase (PKS) FUB1 generates the triketide trans-2-hexenal which is presumptively released by the hydrolase FUB4 and linked to the NRPS-bound amino acid precursor by NAD(P)-dependent dehydrogenase FUB6. FUB1, FUB4, and the non-canonical NRPS Fub8 may form an enzyme complex. Further processing of the NRPS-bound intermediate might be carried out by FUB6 and the sulfhydrylase FUB7, enabling a spontaneous electrocyclization to close the carbon backbone of fusaric acid. Dihydrofusaric acid is likely to be released via reduction by the thioester reductase (TR) domain of FUB8 whereupon the final oxidation to fusaric acid may (also) be performed by the FMN-dependent dehydrogenase FUB9. The sequence is that of Aspartate kinase FUB3 from Gibberella moniliformis (strain M3125 / FGSC 7600) (Maize ear and stalk rot fungus).